Reading from the N-terminus, the 417-residue chain is Alpha-galactosidase (417 aa).

Positions 1 to 55 are cleaved as a signal peptide; the sequence is MARASSSSSPPSPRLLLLLLVAVAATLLPEAAALGNFTAESRGARWRSRRARRRA. Residues Trp-71, Asp-106, Asp-107, Cys-156, Lys-183, Asp-185, Trp-219, Arg-236, and Asp-240 each coordinate alpha-D-galactose. 2 disulfide bridges follow: Cys-76–Cys-108 and Cys-156–Cys-187. Residue Asp-185 is the Nucleophile of the active site. The active-site Proton donor is the Asp-240.

This sequence belongs to the glycosyl hydrolase 27 family.

The catalysed reaction is Hydrolysis of terminal, non-reducing alpha-D-galactose residues in alpha-D-galactosides, including galactose oligosaccharides, galactomannans and galactolipids.. The enzyme catalyses melibiose + H2O = D-galactose + D-glucose. It catalyses the reaction raffinose + H2O = sucrose + D-galactose. It carries out the reaction stachyose + H2O = raffinose + D-galactose. The catalysed reaction is alpha-D-Gal-(1-&gt;6)-beta-D-Man-(1-&gt;4)-beta-D-Man-(1-&gt;4)-D-Man + H2O = beta-D-Man-(1-&gt;4)-beta-D-Man-(1-&gt;4)-D-Man + D-galactose. The enzyme catalyses beta-D-Man-(1-&gt;4)-[alpha-D-Gal-(1-&gt;6)]-beta-D-Man-(1-&gt;4)-beta-D-Man-(1-&gt;4)-D-Man + H2O = beta-D-Man-(1-&gt;4)-beta-D-Man-(1-&gt;4)-beta-D-Man-(1-&gt;4)-D-Man + D-galactose. 1 mM Hg(2+) and Ag(2+) decrease activity by 98% and 96%, respectively. 1 mM Para-chloromercuribenzoic acid (PCMB) completely inhibits enzymatic activity. Functionally, hydrolyzes melibiose, raffinose and stachyose in the following decreasing order of reactivity: raffinose, melibiose, stachyose. Acts on both the terminal alpha-galactosyl residue and the side-chain alpha-galactosyl residue of the galactomanno-oligosaccharides. The sequence is that of Alpha-galactosidase from Oryza sativa subsp. japonica (Rice).